A 116-amino-acid chain; its full sequence is Proline-rich protein 9 (116 aa).

The protein is Proline-rich protein 9 (PRR9) of Homo sapiens (Human).